A 122-amino-acid chain; its full sequence is uncharacterized protein (122 aa).

Helical transmembrane passes span 7–27, 29–49, 62–82, and 89–109; these read IVAI…IFCD, LVLA…LGWI, AITG…SKNP, and KEIF…YFGY.

It is found in the cell membrane. This is an uncharacterized protein from Methanocaldococcus jannaschii (strain ATCC 43067 / DSM 2661 / JAL-1 / JCM 10045 / NBRC 100440) (Methanococcus jannaschii).